Reading from the N-terminus, the 340-residue chain is NADH-quinone oxidoreductase subunit H (340 aa).

Helical transmembrane passes span 3 to 23 (LVGMVALMVGVLVSVAYLVYM), 69 to 89 (WAFFAAPVITFALALAGWAVI), 102 to 122 (VVVMPYVVADLNLGVLYVLAI), 127 to 147 (VYGIIMAGWASGSNYAFLGAI), 154 to 174 (ISYEMSMGLVMLSVSLCAGSL), 186 to 206 (MPYWMDLLLLPMAGVFFVSML), 248 to 268 (ILVSAMMVVLFLGGWYPPLNI), 274 to 294 (IPGFVWFCSKVFLLLFCFIWV), and 312 to 332 (KVFLPFSFVWVMVISGVLLWV).

Belongs to the complex I subunit 1 family. As to quaternary structure, NDH-1 is composed of 14 different subunits. Subunits NuoA, H, J, K, L, M, N constitute the membrane sector of the complex.

It is found in the cell inner membrane. It catalyses the reaction a quinone + NADH + 5 H(+)(in) = a quinol + NAD(+) + 4 H(+)(out). NDH-1 shuttles electrons from NADH, via FMN and iron-sulfur (Fe-S) centers, to quinones in the respiratory chain. The immediate electron acceptor for the enzyme in this species is believed to be ubiquinone. Couples the redox reaction to proton translocation (for every two electrons transferred, four hydrogen ions are translocated across the cytoplasmic membrane), and thus conserves the redox energy in a proton gradient. This subunit may bind ubiquinone. This is NADH-quinone oxidoreductase subunit H from Anaplasma phagocytophilum (strain HZ).